A 100-amino-acid polypeptide reads, in one-letter code: NADH-quinone oxidoreductase subunit K (100 aa).

3 consecutive transmembrane segments (helical) span residues 4 to 24, 28 to 48, and 60 to 80; these read LQHGLLLAAILFVLGLTGLVI, LLFMLISLEIMINASALAFVV, and VMYILAITLAAAEASIGLALL.

Belongs to the complex I subunit 4L family. NDH-1 is composed of 13 different subunits. Subunits NuoA, H, J, K, L, M, N constitute the membrane sector of the complex.

It is found in the cell inner membrane. The enzyme catalyses a quinone + NADH + 5 H(+)(in) = a quinol + NAD(+) + 4 H(+)(out). Its function is as follows. NDH-1 shuttles electrons from NADH, via FMN and iron-sulfur (Fe-S) centers, to quinones in the respiratory chain. The immediate electron acceptor for the enzyme in this species is believed to be ubiquinone. Couples the redox reaction to proton translocation (for every two electrons transferred, four hydrogen ions are translocated across the cytoplasmic membrane), and thus conserves the redox energy in a proton gradient. The sequence is that of NADH-quinone oxidoreductase subunit K from Musicola paradisiaca (strain Ech703) (Dickeya paradisiaca).